Consider the following 85-residue polypeptide: Sodium channel neurotoxin MeuNaTxalpha-2 (85 aa).

A signal peptide spans 1-19; that stretch reads MNYLVMISLALLLMTGVES. The region spanning 21–83 is the LCN-type CS-alpha/beta domain; that stretch reads RDAYIANDRN…VPIRIPGECR (63 aa). Cystine bridges form between cysteine 31–cysteine 82, cysteine 35–cysteine 55, cysteine 41–cysteine 65, and cysteine 45–cysteine 67. At arginine 83 the chain carries Arginine amide.

The protein belongs to the long (4 C-C) scorpion toxin superfamily. Sodium channel inhibitor family. Alpha subfamily. As to expression, expressed by the venom gland.

The protein localises to the secreted. In terms of biological role, alpha toxins bind voltage-independently at site-3 of sodium channels (Nav) and inhibit the inactivation of the activated channels, thereby blocking neuronal transmission. This toxin inhibits inactivation of Nav1.4/SCN4A (EC(50)=2.23 uM) and drosophila DmNav1 (EC(50)=220 nM). The toxin (1 uM) does not significantly shift the midpoint of activation at the two channels, but induces a significant depolarizing shift in the V(1/2) of inactivation of the channels. In addition, the toxin accelerates the recovery from fast inactivation in Nav1.4/SCN4A and DmNav1. It also shows antimicrobial activity. The polypeptide is Sodium channel neurotoxin MeuNaTxalpha-2 (Mesobuthus eupeus (Lesser Asian scorpion)).